Here is a 618-residue protein sequence, read N- to C-terminus: 1-deoxy-D-xylulose-5-phosphate synthase (618 aa).

Thiamine diphosphate contacts are provided by residues His76 and Gly117 to Ser119. Asp148 is a binding site for Mg(2+). Residues Gly149–Ala150, Asn177, Tyr284, and Glu366 each bind thiamine diphosphate. Asn177 provides a ligand contact to Mg(2+).

It belongs to the transketolase family. DXPS subfamily. As to quaternary structure, homodimer. The cofactor is Mg(2+). Thiamine diphosphate serves as cofactor.

The enzyme catalyses D-glyceraldehyde 3-phosphate + pyruvate + H(+) = 1-deoxy-D-xylulose 5-phosphate + CO2. The protein operates within metabolic intermediate biosynthesis; 1-deoxy-D-xylulose 5-phosphate biosynthesis; 1-deoxy-D-xylulose 5-phosphate from D-glyceraldehyde 3-phosphate and pyruvate: step 1/1. Functionally, catalyzes the acyloin condensation reaction between C atoms 2 and 3 of pyruvate and glyceraldehyde 3-phosphate to yield 1-deoxy-D-xylulose-5-phosphate (DXP). In Dechloromonas aromatica (strain RCB), this protein is 1-deoxy-D-xylulose-5-phosphate synthase.